The following is a 523-amino-acid chain: UDP-glucuronosyltransferase 3A1 (523 aa).

A signal peptide spans 1-22 (MAAHRSWLLVSFFLLEVLLLEA). Residues 23 to 487 (AKILTISTLS…QPWHEQYMLD (465 aa)) lie on the Extracellular side of the membrane. The N-linked (GlcNAc...) asparagine glycan is linked to Asn-70. The helical transmembrane segment at 488-508 (VFLFLLGLTLGTLWLSVKVLV) threads the bilayer. At 509 to 523 (AVTRYLSISRKVKQA) the chain is on the cytoplasmic side.

This sequence belongs to the UDP-glycosyltransferase family. As to expression, highly expressed in kidney, while it is expressed at low levels in liver. Not detected in other tissues examined.

Its subcellular location is the membrane. The catalysed reaction is glucuronate acceptor + UDP-alpha-D-glucuronate = acceptor beta-D-glucuronoside + UDP + H(+). In terms of biological role, UDP-glucuronosyltransferases catalyze phase II biotransformation reactions in which lipophilic substrates are conjugated with glucuronic acid to increase water solubility and enhance excretion. They are of major importance in the conjugation and subsequent elimination of potentially toxic xenobiotics and endogenous compounds. This chain is UDP-glucuronosyltransferase 3A1 (Ugt3a1), found in Mus musculus (Mouse).